A 337-amino-acid polypeptide reads, in one-letter code: Casein kinase II subunit alpha (337 aa).

The Protein kinase domain occupies 47–332; sequence YEIIRKIGRG…TREAMEHPYF (286 aa). ATP contacts are provided by residues 53–61 and Lys-76; that span reads IGRGKYSEV. Asp-164 acts as the Proton acceptor in catalysis.

The protein belongs to the protein kinase superfamily. CMGC Ser/Thr protein kinase family. CK2 subfamily. As to quaternary structure, tetramer of two alpha and two beta chains.

The enzyme catalyses L-seryl-[protein] + ATP = O-phospho-L-seryl-[protein] + ADP + H(+). It catalyses the reaction L-threonyl-[protein] + ATP = O-phospho-L-threonyl-[protein] + ADP + H(+). Casein kinases are operationally defined by their preferential utilization of acidic proteins such as caseins as substrates. The alpha chain contains the catalytic site. The sequence is that of Casein kinase II subunit alpha (casK) from Dictyostelium discoideum (Social amoeba).